Consider the following 264-residue polypeptide: tRNA (guanine-N(1)-)-methyltransferase (264 aa).

S-adenosyl-L-methionine contacts are provided by residues glycine 125 and 145-150; that span reads LGDFVL.

This sequence belongs to the RNA methyltransferase TrmD family. As to quaternary structure, homodimer.

The protein resides in the cytoplasm. The catalysed reaction is guanosine(37) in tRNA + S-adenosyl-L-methionine = N(1)-methylguanosine(37) in tRNA + S-adenosyl-L-homocysteine + H(+). Specifically methylates guanosine-37 in various tRNAs. The protein is tRNA (guanine-N(1)-)-methyltransferase of Burkholderia cenocepacia (strain ATCC BAA-245 / DSM 16553 / LMG 16656 / NCTC 13227 / J2315 / CF5610) (Burkholderia cepacia (strain J2315)).